The sequence spans 98 residues: MKINQPAVAGTLESGDVMIRIAPLDTQDIDLQINSSVEKQFGDAIRTTILDVLARYNVRGVQLNVDDKGTLDCILRARLEALLARASGIPTLPWEDCQ.

An O-(phosphoribosyl dephospho-coenzyme A)serine modification is found at Ser-14.

Belongs to the CitD family. In terms of assembly, oligomer with a subunit composition of (alpha,beta,gamma)6.

It is found in the cytoplasm. Functionally, covalent carrier of the coenzyme of citrate lyase. The chain is Citrate lyase acyl carrier protein from Shigella boydii serotype 4 (strain Sb227).